Consider the following 509-residue polypeptide: Bifunctional purine biosynthesis protein PurH (509 aa).

The MGS-like domain occupies 1 to 144 (MKRALLSVSD…KNARDVIVVV (144 aa)).

Belongs to the PurH family.

It carries out the reaction (6R)-10-formyltetrahydrofolate + 5-amino-1-(5-phospho-beta-D-ribosyl)imidazole-4-carboxamide = 5-formamido-1-(5-phospho-D-ribosyl)imidazole-4-carboxamide + (6S)-5,6,7,8-tetrahydrofolate. The catalysed reaction is IMP + H2O = 5-formamido-1-(5-phospho-D-ribosyl)imidazole-4-carboxamide. Its pathway is purine metabolism; IMP biosynthesis via de novo pathway; 5-formamido-1-(5-phospho-D-ribosyl)imidazole-4-carboxamide from 5-amino-1-(5-phospho-D-ribosyl)imidazole-4-carboxamide (10-formyl THF route): step 1/1. The protein operates within purine metabolism; IMP biosynthesis via de novo pathway; IMP from 5-formamido-1-(5-phospho-D-ribosyl)imidazole-4-carboxamide: step 1/1. The chain is Bifunctional purine biosynthesis protein PurH from Oenococcus oeni (strain ATCC BAA-331 / PSU-1).